Consider the following 355-residue polypeptide: tRNA pseudouridine synthase D (355 aa).

Catalysis depends on Asp-84, which acts as the Nucleophile. Residues 160–306 enclose the TRUD domain; the sequence is GVPNYFGLQR…MAHERRILRL (147 aa).

It belongs to the pseudouridine synthase TruD family.

The enzyme catalyses uridine(13) in tRNA = pseudouridine(13) in tRNA. Functionally, responsible for synthesis of pseudouridine from uracil-13 in transfer RNAs. The chain is tRNA pseudouridine synthase D from Pseudomonas aeruginosa (strain UCBPP-PA14).